The chain runs to 703 residues: Polyribonucleotide nucleotidyltransferase (703 aa).

Residues Asp488 and Asp494 each coordinate Mg(2+). In terms of domain architecture, KH spans 555 to 614; sequence PRLYVMKINPEKIRDVIGKGGAVIRALTEETGTQINIEEDGTITIASNDSAKADEAKRRI. Residues 624 to 692 form the S1 motif domain; that stretch reads GKVYEGAITK…EKGRVKLSMK (69 aa).

The protein belongs to the polyribonucleotide nucleotidyltransferase family. Mg(2+) is required as a cofactor.

The protein localises to the cytoplasm. The enzyme catalyses RNA(n+1) + phosphate = RNA(n) + a ribonucleoside 5'-diphosphate. In terms of biological role, involved in mRNA degradation. Catalyzes the phosphorolysis of single-stranded polyribonucleotides processively in the 3'- to 5'-direction. This chain is Polyribonucleotide nucleotidyltransferase, found in Polaromonas naphthalenivorans (strain CJ2).